Reading from the N-terminus, the 374-residue chain is Alanine racemase (374 aa).

Lysine 35 serves as the catalytic Proton acceptor; specific for D-alanine. Position 35 is an N6-(pyridoxal phosphate)lysine (lysine 35). Arginine 133 lines the substrate pocket. The active-site Proton acceptor; specific for L-alanine is tyrosine 261. Methionine 315 provides a ligand contact to substrate.

This sequence belongs to the alanine racemase family. It depends on pyridoxal 5'-phosphate as a cofactor.

It carries out the reaction L-alanine = D-alanine. The protein operates within amino-acid biosynthesis; D-alanine biosynthesis; D-alanine from L-alanine: step 1/1. Its function is as follows. Catalyzes the interconversion of L-alanine and D-alanine. May also act on other amino acids. The protein is Alanine racemase (alr) of Psychrobacter sp. (strain PRwf-1).